We begin with the raw amino-acid sequence, 102 residues long: Small ribosomal subunit protein uS10 (102 aa).

Belongs to the universal ribosomal protein uS10 family. As to quaternary structure, part of the 30S ribosomal subunit.

Involved in the binding of tRNA to the ribosomes. The protein is Small ribosomal subunit protein uS10 of Sulfurisphaera tokodaii (strain DSM 16993 / JCM 10545 / NBRC 100140 / 7) (Sulfolobus tokodaii).